Reading from the N-terminus, the 321-residue chain is MEKSLLFHFRRIGVEFIIFSVYAVFSISWAATGSLMPLISNDLALNTQQATLITSMIVVAKIFGASFTAFLVYKFGLKKGYFLGCILMSSGIFLSFVDSYSGILIIRFLTGLGSACALVCLVPIAQQWFEKKALHFVISFNITSNLVGITLGLVLAESISNYFGNWRDSLSFYAWINLILLILWLFVGKDENKKEEKKNNAKDLIYALKSRVTWGMIIFYIGPILFLNSLFTFLPTFYAQYAGFSKELADFAKKEIPALANFAIIFGPYLGLFFKRKNISFKIMLLSGGACIFICGFCMLFLQNLVLIQIFAVLSGIFYSM.

A run of 9 helical transmembrane segments spans residues 12–32 (IGVE…WAAT), 52–72 (LITS…AFLV), 86–106 (ILMS…ILII), 109–129 (LTGL…QQWF), 136–156 (FVIS…LVLA), 168–188 (DSLS…LFVG), 214–234 (WGMI…FTFL), 254–274 (KEIP…GLFF), and 292–312 (IFIC…QIFA).

The protein resides in the cell membrane. This is an uncharacterized protein from Campylobacter jejuni subsp. jejuni serotype O:2 (strain ATCC 700819 / NCTC 11168).